We begin with the raw amino-acid sequence, 275 residues long: Ribosomal RNA small subunit methyltransferase A (275 aa).

Positions 21, 23, 48, 69, 94, and 115 each coordinate S-adenosyl-L-methionine.

It belongs to the class I-like SAM-binding methyltransferase superfamily. rRNA adenine N(6)-methyltransferase family. RsmA subfamily.

It is found in the cytoplasm. The catalysed reaction is adenosine(1518)/adenosine(1519) in 16S rRNA + 4 S-adenosyl-L-methionine = N(6)-dimethyladenosine(1518)/N(6)-dimethyladenosine(1519) in 16S rRNA + 4 S-adenosyl-L-homocysteine + 4 H(+). In terms of biological role, specifically dimethylates two adjacent adenosines (A1518 and A1519) in the loop of a conserved hairpin near the 3'-end of 16S rRNA in the 30S particle. May play a critical role in biogenesis of 30S subunits. This is Ribosomal RNA small subunit methyltransferase A from Clostridium botulinum (strain Okra / Type B1).